Here is a 799-residue protein sequence, read N- to C-terminus: Leucine--tRNA ligase (799 aa).

Residues 39–50 (PYPSGAGLHMGH) carry the 'HIGH' region motif. A 'KMSKS' region motif is present at residues 575–579 (KMSKS). Lys578 serves as a coordination point for ATP.

Belongs to the class-I aminoacyl-tRNA synthetase family.

The protein localises to the cytoplasm. It carries out the reaction tRNA(Leu) + L-leucine + ATP = L-leucyl-tRNA(Leu) + AMP + diphosphate. In Malacoplasma penetrans (strain HF-2) (Mycoplasma penetrans), this protein is Leucine--tRNA ligase.